Reading from the N-terminus, the 328-residue chain is Malate dehydrogenase (328 aa).

11 to 17 (GAAGQIG) is a binding site for NAD(+). Residues Arg94 and Arg100 each coordinate substrate. NAD(+) is bound by residues Asn107, Gln114, and 131-133 (VGN). Substrate-binding residues include Asn133 and Arg164. The Proton acceptor role is filled by His189.

The protein belongs to the LDH/MDH superfamily. MDH type 2 family.

It carries out the reaction (S)-malate + NAD(+) = oxaloacetate + NADH + H(+). Catalyzes the reversible oxidation of malate to oxaloacetate. In Xylella fastidiosa (strain M23), this protein is Malate dehydrogenase.